A 505-amino-acid chain; its full sequence is Activin receptor type-1B (505 aa).

Residues 1–23 (MAESAGASSFFPLVVLLLAGSGG) form the signal peptide. Residues 24–126 (SGPRGVQALL…EHPSMWGPVE (103 aa)) lie on the Extracellular side of the membrane. An N-linked (GlcNAc...) asparagine glycan is attached at N43. A helical membrane pass occupies residues 127–149 (LVGIIAGPVFLLFLIIIIVFLVI). At 150–505 (NYHQRVYHNR…QLSVQEDVKI (356 aa)) the chain is on the cytoplasmic side. The GS domain maps to 177 to 206 (KTLQDLVYDLSTSGSGSGLPLFVQRTVART). Residues 207 to 497 (IVLQEIIGKG…LRIKKTLSQL (291 aa)) form the Protein kinase domain. ATP contacts are provided by residues 213–221 (IGKGRFGEV) and K234. The active-site Proton acceptor is the D335. Y380 carries the post-translational modification Phosphotyrosine.

This sequence belongs to the protein kinase superfamily. TKL Ser/Thr protein kinase family. TGFB receptor subfamily. In terms of assembly, forms an activin receptor complex with activin receptor type-2 (ACVR2A or ACVR2B). Part of a complex consisting of MAGI2/ARIP1, ACVR2A, ACVR1B and SMAD3. Interacts with SMAD2 and SMAD3. Interacts with SMAD7. Interacts with FKBP1A. Interacts with IGSF1. Interacts with CRIPTO. Interacts with TDP2. Interacts with TSC22D1/TSC-22. The cofactor is Mg(2+). Mn(2+) serves as cofactor. Post-translationally, autophosphorylated. Phosphorylated by activin receptor type-2 (ACVR2A or ACVR2B) in response to activin-binding at serine and threonine residues in the GS domain. Phosphorylation of ACVR1B by activin receptor type-2 regulates association with SMAD7. Ubiquitinated. Level of ubiquitination is regulated by the SMAD7-SMURF1 complex. In terms of processing, ubiquitinated. In terms of tissue distribution, expressed in many tissues, most strongly in kidney, pancreas, brain, lung, and liver.

It is found in the cell membrane. It carries out the reaction L-threonyl-[receptor-protein] + ATP = O-phospho-L-threonyl-[receptor-protein] + ADP + H(+). It catalyses the reaction L-seryl-[receptor-protein] + ATP = O-phospho-L-seryl-[receptor-protein] + ADP + H(+). Its activity is regulated as follows. Activin receptor type-2 (ACVR2A or ACVR2B) activates the type-1 receptor through phosphorylation of its regulatory GS domain. Functionally, transmembrane serine/threonine kinase activin type-1 receptor forming an activin receptor complex with activin receptor type-2 (ACVR2A or ACVR2B). Transduces the activin signal from the cell surface to the cytoplasm and is thus regulating a many physiological and pathological processes including neuronal differentiation and neuronal survival, hair follicle development and cycling, FSH production by the pituitary gland, wound healing, extracellular matrix production, immunosuppression and carcinogenesis. Activin is also thought to have a paracrine or autocrine role in follicular development in the ovary. Within the receptor complex, type-2 receptors (ACVR2A and/or ACVR2B) act as a primary activin receptors whereas the type-1 receptors like ACVR1B act as downstream transducers of activin signals. Activin binds to type-2 receptor at the plasma membrane and activates its serine-threonine kinase. The activated receptor type-2 then phosphorylates and activates the type-1 receptor such as ACVR1B. Once activated, the type-1 receptor binds and phosphorylates the SMAD proteins SMAD2 and SMAD3, on serine residues of the C-terminal tail. Soon after their association with the activin receptor and subsequent phosphorylation, SMAD2 and SMAD3 are released into the cytoplasm where they interact with the common partner SMAD4. This SMAD complex translocates into the nucleus where it mediates activin-induced transcription. Inhibitory SMAD7, which is recruited to ACVR1B through FKBP1A, can prevent the association of SMAD2 and SMAD3 with the activin receptor complex, thereby blocking the activin signal. Activin signal transduction is also antagonized by the binding to the receptor of inhibin-B via the IGSF1 inhibin coreceptor. ACVR1B also phosphorylates TDP2. The chain is Activin receptor type-1B (ACVR1B) from Homo sapiens (Human).